The following is a 444-amino-acid chain: Sensor protein CiaH (444 aa).

2 helical membrane passes run 21–41 (FGVFTLIFSTMTLIILQVMHS) and 183–203 (LIVVVMASFWILSLLASLYLA). Residues 223–438 (NASHELRTPL…IFEVKIAIQT (216 aa)) form the Histidine kinase domain. Phosphohistidine; by autocatalysis is present on H226.

It localises to the cell membrane. The enzyme catalyses ATP + protein L-histidine = ADP + protein N-phospho-L-histidine.. Member of the two-component regulatory system CiaH/CiaR. Involved in early steps of competence regulation and in penicillin susceptibility. Probably phosphorylates CiaR. The polypeptide is Sensor protein CiaH (ciaH) (Streptococcus pneumoniae serotype 4 (strain ATCC BAA-334 / TIGR4)).